A 416-amino-acid chain; its full sequence is Creatine kinase U-type, mitochondrial (416 aa).

The N-terminal 39 residues, 1-39 (MAGPFSRLLSARPGLRLLALAGAGSLAAGFLLRPEPIRA), are a transit peptide targeting the mitochondrion. Residues 40–63 (ASERRRQYPPSAEYPDLRKHNNCM) are cardiolipin-binding. Residues 44 to 131 (RRQYPPSAEY…FDPVIQERHN (88 aa)) enclose the Phosphagen kinase N-terminal domain. Serine 151 is modified (phosphoserine). The 243-residue stretch at 158–400 (YVLSSRVRTG…NYLIDCERRL (243 aa)) folds into the Phosphagen kinase C-terminal domain. 161-165 (SSRVR) lines the ATP pocket. Serine 196 carries the post-translational modification Phosphoserine. Threonine 213 carries the post-translational modification Phosphothreonine. Histidine 224 provides a ligand contact to ATP. A Phosphoserine modification is found at serine 232. Residues arginine 269, arginine 325, and 353–358 (RGTGGV) each bind ATP. Threonine 355 carries the phosphothreonine modification. Residue serine 365 is modified to Phosphoserine. Position 368 (aspartate 368) interacts with ATP.

The protein belongs to the ATP:guanido phosphotransferase family. Exists as an octamer composed of four MTCK homodimers.

The protein resides in the mitochondrion inner membrane. The enzyme catalyses creatine + ATP = N-phosphocreatine + ADP + H(+). In terms of biological role, reversibly catalyzes the transfer of phosphate between ATP and various phosphogens (e.g. creatine phosphate). Creatine kinase isoenzymes play a central role in energy transduction in tissues with large, fluctuating energy demands, such as skeletal muscle, heart, brain and spermatozoa. The protein is Creatine kinase U-type, mitochondrial (CKMT1) of Sus scrofa (Pig).